Consider the following 201-residue polypeptide: Large ribosomal subunit protein uL4 (201 aa).

The tract at residues 44 to 71 is disordered; it reads RAQKTRAEVTGSGKKPWRQKGTGRARSG.

Belongs to the universal ribosomal protein uL4 family. As to quaternary structure, part of the 50S ribosomal subunit.

One of the primary rRNA binding proteins, this protein initially binds near the 5'-end of the 23S rRNA. It is important during the early stages of 50S assembly. It makes multiple contacts with different domains of the 23S rRNA in the assembled 50S subunit and ribosome. Its function is as follows. Forms part of the polypeptide exit tunnel. The polypeptide is Large ribosomal subunit protein uL4 (Enterobacter sp. (strain 638)).